The sequence spans 121 residues: Large ribosomal subunit protein bL17 (121 aa).

It belongs to the bacterial ribosomal protein bL17 family. As to quaternary structure, part of the 50S ribosomal subunit. Contacts protein L32.

This is Large ribosomal subunit protein bL17 from Metamycoplasma arthritidis (strain 158L3-1) (Mycoplasma arthritidis).